The primary structure comprises 491 residues: MNYKAHYIGGRWIEGQGESITKFSPIDQQVLWQANSADASQVRAACHAAREAFYAWSHLPASERIKVIQTFAALLNEEKETLARVISQETSKPLWETRTEIQSMIGKAAISIEAWEQRTGESETIMPDGRALLRHRPHGVMAVFGPYNFPGHLPNGHIIPALIAGNTLVFKPSELTPMTAEETVKLWEKAGLPAGVLNLVQGARSTGTALLEDKQIDGVLFTGSANTGFHFHRMLGGQPEKMLALEMGGNNALIVDAYDDIDAAVYTIVQSAFISAGQRCTCARRLLVKNGAHGDAVIKRLVEVTERIVPSHWDAQPQPFIGGVISLQAVQNLLEAQDRLQKLGGISLVSLEQCQPQSTLLTPGIIDVSQVADVPDEEYFGPLLMLMRYDTFDEALAIANNTRFGLATGLISPDAALFQRLSEDARAGIVNWNKPLTGASSKAPFGGIGASGNYRPSAYYAADYCAWPMASLVADELTLPETLAPGLHFPD.

223–228 (GSANTG) is a binding site for NAD(+). Active-site residues include glutamate 246 and cysteine 280.

The protein belongs to the aldehyde dehydrogenase family. AstD subfamily.

It catalyses the reaction N-succinyl-L-glutamate 5-semialdehyde + NAD(+) + H2O = N-succinyl-L-glutamate + NADH + 2 H(+). The protein operates within amino-acid degradation; L-arginine degradation via AST pathway; L-glutamate and succinate from L-arginine: step 4/5. Catalyzes the NAD-dependent reduction of succinylglutamate semialdehyde into succinylglutamate. The protein is N-succinylglutamate 5-semialdehyde dehydrogenase of Photorhabdus laumondii subsp. laumondii (strain DSM 15139 / CIP 105565 / TT01) (Photorhabdus luminescens subsp. laumondii).